Here is a 368-residue protein sequence, read N- to C-terminus: Protein-glutamate methylesterase/protein-glutamine glutaminase (368 aa).

The Response regulatory domain occupies 9–126; it reads KVLVVDDSAF…SINMKELKDE (118 aa). A 4-aspartylphosphate modification is found at Asp-60. The 194-residue stretch at 161 to 354 folds into the CheB-type methylesterase domain; sequence SVPARIAVAI…ETVVKAVEII (194 aa). Catalysis depends on residues Ser-173, His-200, and Asp-296.

This sequence belongs to the CheB family. Post-translationally, phosphorylated by CheA. Phosphorylation of the N-terminal regulatory domain activates the methylesterase activity.

Its subcellular location is the cytoplasm. It catalyses the reaction [protein]-L-glutamate 5-O-methyl ester + H2O = L-glutamyl-[protein] + methanol + H(+). The enzyme catalyses L-glutaminyl-[protein] + H2O = L-glutamyl-[protein] + NH4(+). In terms of biological role, involved in chemotaxis. Part of a chemotaxis signal transduction system that modulates chemotaxis in response to various stimuli. Catalyzes the demethylation of specific methylglutamate residues introduced into the chemoreceptors (methyl-accepting chemotaxis proteins or MCP) by CheR. Also mediates the irreversible deamidation of specific glutamine residues to glutamic acid. The protein is Protein-glutamate methylesterase/protein-glutamine glutaminase of Pyrococcus horikoshii (strain ATCC 700860 / DSM 12428 / JCM 9974 / NBRC 100139 / OT-3).